Consider the following 107-residue polypeptide: Integration host factor subunit alpha (107 aa).

This sequence belongs to the bacterial histone-like protein family. In terms of assembly, heterodimer of an alpha and a beta chain.

Functionally, this protein is one of the two subunits of integration host factor, a specific DNA-binding protein that functions in genetic recombination as well as in transcriptional and translational control. This chain is Integration host factor subunit alpha, found in Bartonella tribocorum (strain CIP 105476 / IBS 506).